The primary structure comprises 318 residues: NADH-quinone oxidoreductase subunit H 2 (318 aa).

Helical transmembrane passes span 4 to 24 (LLIA…AGVF), 77 to 97 (LAPA…AFAP), 106 to 126 (VGVL…VLGA), 146 to 166 (LAYE…AGSF), 179 to 199 (LWFI…GLAA), 214 to 234 (LVAG…FLGE), 238 to 258 (ILLV…GPIL), 262 to 282 (IWFG…RAAL), and 293 to 313 (FAWK…AWIA).

It belongs to the complex I subunit 1 family. As to quaternary structure, NDH-1 is composed of 14 different subunits. Subunits NuoA, H, J, K, L, M, N constitute the membrane sector of the complex.

It is found in the cell inner membrane. It catalyses the reaction a quinone + NADH + 5 H(+)(in) = a quinol + NAD(+) + 4 H(+)(out). Its function is as follows. NDH-1 shuttles electrons from NADH, via FMN and iron-sulfur (Fe-S) centers, to quinones in the respiratory chain. The immediate electron acceptor for the enzyme in this species is believed to be ubiquinone. Couples the redox reaction to proton translocation (for every two electrons transferred, four hydrogen ions are translocated across the cytoplasmic membrane), and thus conserves the redox energy in a proton gradient. This subunit may bind ubiquinone. This chain is NADH-quinone oxidoreductase subunit H 2, found in Cereibacter sphaeroides (strain ATCC 17023 / DSM 158 / JCM 6121 / CCUG 31486 / LMG 2827 / NBRC 12203 / NCIMB 8253 / ATH 2.4.1.) (Rhodobacter sphaeroides).